Reading from the N-terminus, the 422-residue chain is ORC1-type DNA replication protein 13 (422 aa).

ATP is bound by residues 80-84, Y231, and R243; that span reads TGKTL.

The protein belongs to the CDC6/cdc18 family.

Functionally, involved in regulation of DNA replication. The protein is ORC1-type DNA replication protein 13 (cdc6m) of Haloarcula marismortui (strain ATCC 43049 / DSM 3752 / JCM 8966 / VKM B-1809) (Halobacterium marismortui).